Here is a 282-residue protein sequence, read N- to C-terminus: MTQDPSSQISWSQTIVLSIVQGLTEFLPISSSGHLRIVSELFWGKDAGASFTAVVQLGTEAAVLVYFAKDIAKILTGWFRGLFDKKQRGFDYRMGWMVIVGTLPVSIVGLLAKDIIRDNLRNMWITASVLIAFSFVFIAAEKWGSKRRSFDQLTMRDAVIMGCAQCLALIPGVSRSGGTVSAGLFVGLDREVATRFSFLLAIPAVLASGLFSLPDAFAPDAGQAASGMQLAVGTGIAFALGYASIAWLLKFVGSHSFSWFAAYRIPVGLLVMALLATGMLTA.

5 consecutive transmembrane segments (helical) span residues 96–116, 123–143, 198–218, 229–249, and 260–280; these read WMVI…KDII, MWIT…AEKW, FLLA…DAFA, QLAV…AWLL, and FAAY…TGML.

It belongs to the UppP family.

The protein resides in the cell membrane. The enzyme catalyses di-trans,octa-cis-undecaprenyl diphosphate + H2O = di-trans,octa-cis-undecaprenyl phosphate + phosphate + H(+). Its function is as follows. Catalyzes the dephosphorylation of undecaprenyl diphosphate (UPP). Confers resistance to bacitracin. The protein is Undecaprenyl-diphosphatase of Corynebacterium diphtheriae (strain ATCC 700971 / NCTC 13129 / Biotype gravis).